Here is a 281-residue protein sequence, read N- to C-terminus: Bifunctional protein FolD 1 (281 aa).

NADP(+) is bound by residues 165–167, Ser190, and Ile231; that span reads GRS.

Belongs to the tetrahydrofolate dehydrogenase/cyclohydrolase family. In terms of assembly, homodimer.

It carries out the reaction (6R)-5,10-methylene-5,6,7,8-tetrahydrofolate + NADP(+) = (6R)-5,10-methenyltetrahydrofolate + NADPH. It catalyses the reaction (6R)-5,10-methenyltetrahydrofolate + H2O = (6R)-10-formyltetrahydrofolate + H(+). It participates in one-carbon metabolism; tetrahydrofolate interconversion. Catalyzes the oxidation of 5,10-methylenetetrahydrofolate to 5,10-methenyltetrahydrofolate and then the hydrolysis of 5,10-methenyltetrahydrofolate to 10-formyltetrahydrofolate. In Desulfitobacterium hafniense (strain Y51), this protein is Bifunctional protein FolD 1.